Reading from the N-terminus, the 148-residue chain is NADPH-dependent 7-cyano-7-deazaguanine reductase (148 aa).

Cys-50 functions as the Thioimide intermediate in the catalytic mechanism. Asp-57 acts as the Proton donor in catalysis. Residues 72–74 (VES) and 91–92 (HE) each bind substrate.

Belongs to the GTP cyclohydrolase I family. QueF type 1 subfamily.

Its subcellular location is the cytoplasm. The enzyme catalyses 7-aminomethyl-7-carbaguanine + 2 NADP(+) = 7-cyano-7-deazaguanine + 2 NADPH + 3 H(+). Its pathway is tRNA modification; tRNA-queuosine biosynthesis. Functionally, catalyzes the NADPH-dependent reduction of 7-cyano-7-deazaguanine (preQ0) to 7-aminomethyl-7-deazaguanine (preQ1). The chain is NADPH-dependent 7-cyano-7-deazaguanine reductase from Helicobacter pylori (strain ATCC 700392 / 26695) (Campylobacter pylori).